The primary structure comprises 398 residues: Acetate kinase (398 aa).

Residue N8 coordinates Mg(2+). K15 lines the ATP pocket. Position 90 (R90) interacts with substrate. Residue D147 is the Proton donor/acceptor of the active site. Residues 207–211 (HIGAG), 282–284 (DMR), and 330–334 (GVGEN) contribute to the ATP site. Residue E383 coordinates Mg(2+).

This sequence belongs to the acetokinase family. As to quaternary structure, homodimer. It depends on Mg(2+) as a cofactor. The cofactor is Mn(2+).

It is found in the cytoplasm. The catalysed reaction is acetate + ATP = acetyl phosphate + ADP. It participates in metabolic intermediate biosynthesis; acetyl-CoA biosynthesis; acetyl-CoA from acetate: step 1/2. Catalyzes the formation of acetyl phosphate from acetate and ATP. Can also catalyze the reverse reaction. The protein is Acetate kinase of Limosilactobacillus fermentum (strain NBRC 3956 / LMG 18251) (Lactobacillus fermentum).